The primary structure comprises 696 residues: Phosphate acetyltransferase (696 aa).

The phosphate acetyltransferase stretch occupies residues 367-696 (FEHKLLEQAR…QSPHEKATAQ (330 aa)).

It in the N-terminal section; belongs to the CobB/CobQ family. The protein in the C-terminal section; belongs to the phosphate acetyltransferase and butyryltransferase family.

It localises to the cytoplasm. The enzyme catalyses acetyl-CoA + phosphate = acetyl phosphate + CoA. It participates in metabolic intermediate biosynthesis; acetyl-CoA biosynthesis; acetyl-CoA from acetate: step 2/2. Its function is as follows. Involved in acetate metabolism. In Streptomyces avermitilis (strain ATCC 31267 / DSM 46492 / JCM 5070 / NBRC 14893 / NCIMB 12804 / NRRL 8165 / MA-4680), this protein is Phosphate acetyltransferase (pta).